A 271-amino-acid chain; its full sequence is 3-methyl-2-oxobutanoate hydroxymethyltransferase 1 (271 aa).

Residues D53 and D92 each contribute to the Mg(2+) site. 3-methyl-2-oxobutanoate contacts are provided by residues 53–54, D92, and K120; that span reads DS. E122 provides a ligand contact to Mg(2+). E189 acts as the Proton acceptor in catalysis.

It belongs to the PanB family. Homodecamer; pentamer of dimers. It depends on Mg(2+) as a cofactor.

The protein resides in the cytoplasm. It catalyses the reaction 3-methyl-2-oxobutanoate + (6R)-5,10-methylene-5,6,7,8-tetrahydrofolate + H2O = 2-dehydropantoate + (6S)-5,6,7,8-tetrahydrofolate. Its pathway is cofactor biosynthesis; (R)-pantothenate biosynthesis; (R)-pantoate from 3-methyl-2-oxobutanoate: step 1/2. Functionally, catalyzes the reversible reaction in which hydroxymethyl group from 5,10-methylenetetrahydrofolate is transferred onto alpha-ketoisovalerate to form ketopantoate. This chain is 3-methyl-2-oxobutanoate hydroxymethyltransferase 1, found in Burkholderia cenocepacia (strain HI2424).